The chain runs to 211 residues: Ribonuclease HII (211 aa).

Positions 17–211 (FLSAGVDEVG…CQPSLFEVRS (195 aa)) constitute an RNase H type-2 domain. Asp-23, Glu-24, and Asp-119 together coordinate a divalent metal cation.

The protein belongs to the RNase HII family. Mn(2+) is required as a cofactor. It depends on Mg(2+) as a cofactor.

The protein localises to the cytoplasm. It carries out the reaction Endonucleolytic cleavage to 5'-phosphomonoester.. Functionally, endonuclease that specifically degrades the RNA of RNA-DNA hybrids. The sequence is that of Ribonuclease HII from Trichodesmium erythraeum (strain IMS101).